A 558-amino-acid polypeptide reads, in one-letter code: Two-component response regulator-like APRR5 (558 aa).

A Response regulatory domain is found at 51–169 (RVLLVEADDS…ELRNLWQHVW (119 aa)). The tract at residues 180–233 (FPWNESVGQQKAEGASANNSNGKRDDHVVSGNGGDAQSSCTRPEMEGESADVEV) is disordered. Residues 240-260 (QMECAKSQFNETRLLANELQS) adopt a coiled-coil conformation. Disordered regions lie at residues 297–319 (SLRR…HPSS) and 535–558 (KKLA…TQAP). Positions 303-319 (ASENQSSGDRPSLHPSS) are enriched in polar residues. The CCT domain maps to 509–551 (REAALTKFRMKRKDRCYEKKVRYESRKKLAEQRPRIKGQFVRQ).

Belongs to the ARR-like family. As to quaternary structure, interacts with ADO1 and ADO2. Interacts with SPY (via N-terminus). Phosphorylation varies throughout the diurnal cycle and enhances ADO1 binding. In terms of processing, O-fucosylated by SPY. O-fucosylation promotes APRR5 proteolysis.

The protein localises to the nucleus. Transcriptional repressor of CCA1 and LHY, thereby controlling photoperiodic flowering response. Involved in the positive and negative feedback loops of the circadian clock. With RVE8, forms a negative feedback loop of the circadian clock. Expression of several members of the ARR-like family is controlled by circadian rhythm. Proteolytic substrate of the E3 ubiquitin ligase SCF(ADO1) complex. APRR9, APRR7, and APRR5 coordinately act on the upstream region of the target genes to repress their expression from noon until midnight. The particular coordinated sequential expression of APRR9, APRR7, APRR5, APRR3 and APPR1 result to circadian waves that may be at the basis of the endogenous circadian clock. Negative regulator of shade avoidance response. Involved in the inhibition of leaf expansion in shade avoidance response. This chain is Two-component response regulator-like APRR5 (APRR5), found in Arabidopsis thaliana (Mouse-ear cress).